The chain runs to 114 residues: Amphinase-4 (114 aa).

Residue His-15 is the Proton acceptor of the active site. 4 disulfide bridges follow: Cys-26–Cys-79, Cys-41–Cys-85, Cys-59–Cys-100, and Cys-97–Cys-114. N-linked (GlcNAc...) asparagine glycosylation is present at Asn-27. 42–46 (KPVNT) serves as a coordination point for substrate. N-linked (GlcNAc...) asparagine glycans are attached at residues Asn-67 and Asn-91. The active-site Proton donor is His-107.

It belongs to the pancreatic ribonuclease family. As to quaternary structure, monomer. Post-translationally, there are at least five different forms arising from glycan heterogeneity.

It is found in the secreted. Its function is as follows. Endonuclease, hydrolyzes highly polymerized RNA, poly(U) and poly(C), and the dinucleotides CpA and UpA. Hydrolyzes rCA, rUA and rUG. Has cytotoxic activity against cultured human submaxillary gland carcinoma cells. This chain is Amphinase-4, found in Lithobates pipiens (Northern leopard frog).